We begin with the raw amino-acid sequence, 441 residues long: Ankyrin repeat and MYND domain-containing protein 2 (441 aa).

ANK repeat units follow at residues 45–74 (NGMT…DVNC), 79–108 (HGYT…ETDV), and 159–188 (KLAG…NPLL). Zn(2+) contacts are provided by cysteine 320, cysteine 323, cysteine 332, cysteine 335, cysteine 341, cysteine 345, histidine 353, and cysteine 357. Residues 320–357 (CTTCGEKGASKRCSVCKMVIYCDQTCQKTHWFTHKKIC) form an MYND-type zinc finger. Over residues 374-384 (EKRQEENHGKL) the composition is skewed to basic and acidic residues. Positions 374-441 (EKRQEENHGK…APAGPQVSEE (68 aa)) are disordered.

Interacts with the retinal-specific guanylyl cyclase GC1.

The protein localises to the cell projection. Its subcellular location is the cilium. May be involved in the trafficking of signaling proteins to the cilia. The chain is Ankyrin repeat and MYND domain-containing protein 2 (ANKMY2) from Homo sapiens (Human).